The primary structure comprises 302 residues: Glycine--tRNA ligase alpha subunit (302 aa).

This sequence belongs to the class-II aminoacyl-tRNA synthetase family. Tetramer of two alpha and two beta subunits.

It is found in the cytoplasm. The catalysed reaction is tRNA(Gly) + glycine + ATP = glycyl-tRNA(Gly) + AMP + diphosphate. In Xanthomonas euvesicatoria pv. vesicatoria (strain 85-10) (Xanthomonas campestris pv. vesicatoria), this protein is Glycine--tRNA ligase alpha subunit.